A 180-amino-acid chain; its full sequence is NAD(P)H-quinone oxidoreductase subunit I, chloroplastic (180 aa).

2 4Fe-4S ferredoxin-type domains span residues 55–84 (GRIH…VDWK) and 95–124 (LNYS…MTEE). Residues Cys64, Cys67, Cys70, Cys74, Cys104, Cys107, Cys110, and Cys114 each contribute to the [4Fe-4S] cluster site.

It belongs to the complex I 23 kDa subunit family. As to quaternary structure, NDH is composed of at least 16 different subunits, 5 of which are encoded in the nucleus. [4Fe-4S] cluster is required as a cofactor.

The protein resides in the plastid. Its subcellular location is the chloroplast thylakoid membrane. It carries out the reaction a plastoquinone + NADH + (n+1) H(+)(in) = a plastoquinol + NAD(+) + n H(+)(out). The catalysed reaction is a plastoquinone + NADPH + (n+1) H(+)(in) = a plastoquinol + NADP(+) + n H(+)(out). Its function is as follows. NDH shuttles electrons from NAD(P)H:plastoquinone, via FMN and iron-sulfur (Fe-S) centers, to quinones in the photosynthetic chain and possibly in a chloroplast respiratory chain. The immediate electron acceptor for the enzyme in this species is believed to be plastoquinone. Couples the redox reaction to proton translocation, and thus conserves the redox energy in a proton gradient. The polypeptide is NAD(P)H-quinone oxidoreductase subunit I, chloroplastic (Nandina domestica (Heavenly bamboo)).